We begin with the raw amino-acid sequence, 112 residues long: DNA-binding protein Memar_1972 (112 aa).

Residues 14-35 (MEQMQRQAMDQQGMEEEAARQQ) form a disordered region.

It belongs to the PDCD5 family.

The protein is DNA-binding protein Memar_1972 of Methanoculleus marisnigri (strain ATCC 35101 / DSM 1498 / JR1).